We begin with the raw amino-acid sequence, 492 residues long: Cytochrome P450 26A1 (492 aa).

Heme is bound at residue Cys-437.

This sequence belongs to the cytochrome P450 family. The cofactor is heme. In terms of tissue distribution, expressed primarily in ovary, brain and eyes.

It localises to the endoplasmic reticulum membrane. It is found in the microsome membrane. The enzyme catalyses all-trans-retinoate + reduced [NADPH--hemoprotein reductase] + O2 = all-trans-(4S)-hydroxyretinoate + oxidized [NADPH--hemoprotein reductase] + H2O + H(+). A cytochrome P450 monooxygenase involved in the metabolism of all-trans retinoic acid (atRA), a signaling molecule that binds to retinoic acid receptors and regulates gene transcription. May regulate at-RA signaling during hindbrain development. Mechanistically, uses molecular oxygen inserting one oxygen atom into a substrate, and reducing the second into a water molecule, with two electrons provided by NADPH via cytochrome P450 reductase (CPR; NADPH-ferrihemoprotein reductase). Catalyzes the hydroxylation of carbon hydrogen bonds of atRA primarily at C-4. Has no activity toward 9-cis and 13-cis retinoic acid stereoisomers. May play a role in the oxidative metabolism of xenobiotics such as tazarotenic acid. The chain is Cytochrome P450 26A1 (cyp26a1) from Xenopus laevis (African clawed frog).